The chain runs to 345 residues: S-adenosylmethionine:tRNA ribosyltransferase-isomerase (345 aa).

It belongs to the QueA family. In terms of assembly, monomer.

It is found in the cytoplasm. It carries out the reaction 7-aminomethyl-7-carbaguanosine(34) in tRNA + S-adenosyl-L-methionine = epoxyqueuosine(34) in tRNA + adenine + L-methionine + 2 H(+). Its pathway is tRNA modification; tRNA-queuosine biosynthesis. Functionally, transfers and isomerizes the ribose moiety from AdoMet to the 7-aminomethyl group of 7-deazaguanine (preQ1-tRNA) to give epoxyqueuosine (oQ-tRNA). This Anaeromyxobacter sp. (strain Fw109-5) protein is S-adenosylmethionine:tRNA ribosyltransferase-isomerase.